The primary structure comprises 429 residues: BURP domain-containing protein 3 (429 aa).

An N-terminal signal peptide occupies residues 1–21 (MDRLLACLLGFLLIASVGSHA). The segment at 59-81 (GGGVHVDAGHGKPGGTTVDVGKG) is disordered. Residues 213–428 (FFLEKDLHPG…PQDHVVWTRS (216 aa)) form the BURP domain.

Expressed in stems, leaves, shoot, panicles and stamen.

The polypeptide is BURP domain-containing protein 3 (BURP3) (Oryza sativa subsp. japonica (Rice)).